The following is a 253-amino-acid chain: Ubiquinone biosynthesis O-methyltransferase (253 aa).

S-adenosyl-L-methionine contacts are provided by Arg47, Gly78, Asp99, and Met141.

It belongs to the methyltransferase superfamily. UbiG/COQ3 family.

It catalyses the reaction a 3-demethylubiquinol + S-adenosyl-L-methionine = a ubiquinol + S-adenosyl-L-homocysteine + H(+). It carries out the reaction a 3-(all-trans-polyprenyl)benzene-1,2-diol + S-adenosyl-L-methionine = a 2-methoxy-6-(all-trans-polyprenyl)phenol + S-adenosyl-L-homocysteine + H(+). Its pathway is cofactor biosynthesis; ubiquinone biosynthesis. Functionally, O-methyltransferase that catalyzes the 2 O-methylation steps in the ubiquinone biosynthetic pathway. This chain is Ubiquinone biosynthesis O-methyltransferase, found in Bradyrhizobium diazoefficiens (strain JCM 10833 / BCRC 13528 / IAM 13628 / NBRC 14792 / USDA 110).